The primary structure comprises 649 residues: Putative cystathionine gamma-synthase YML082W (649 aa).

The interval 242-273 is disordered; it reads NEANHGEDHDGGISGEVDSQEEPHNGLVSTIP. A Phosphoserine modification is found at Ser-287. Lys-451 carries the N6-(pyridoxal phosphate)lysine modification.

It belongs to the trans-sulfuration enzymes family. MET7 subfamily. Pyridoxal 5'-phosphate serves as cofactor.

The enzyme catalyses O-succinyl-L-homoserine + L-cysteine = L,L-cystathionine + succinate + H(+). The protein operates within amino-acid biosynthesis; L-methionine biosynthesis via de novo pathway; L-cystathionine from O-succinyl-L-homoserine: step 1/1. Catalyzes the formation of L-cystathionine from O-succinyl-L-homoserine (OSHS) and L-cysteine, via a gamma-replacement reaction. In the absence of thiol, catalyzes gamma-elimination to form 2-oxobutanoate, succinate and ammonia. This chain is Putative cystathionine gamma-synthase YML082W, found in Saccharomyces cerevisiae (strain ATCC 204508 / S288c) (Baker's yeast).